Consider the following 404-residue polypeptide: Immediate early response gene 5-like protein (404 aa).

Disordered stretches follow at residues 86–107 (AADF…EPAA), 160–231 (AALQ…APAS), and 308–327 (QEEE…EPPG). Residues 177–194 (PLQPGPAPLPLPLPPPAP) are compositionally biased toward pro residues. A compositionally biased stretch (low complexity) spans 195–231 (AALCPRDPRAPAACSAPPGAAPPAAAASPPASPAPAS). Residues 308 to 318 (QEEEEDDEEDA) show a composition bias toward acidic residues.

The protein belongs to the IER family.

This chain is Immediate early response gene 5-like protein (IER5L), found in Homo sapiens (Human).